We begin with the raw amino-acid sequence, 295 residues long: Probable palmitoyltransferase ZDHHC24 (295 aa).

The Cytoplasmic segment spans residues 1–20 (MTSFMSRVWCKVESTGRQLP). The helical transmembrane segment at 21 to 41 (IVLNAVLVFSITAEVSYLVLV) threads the bilayer. At 42–60 (EAPFEPEQKKTDWSTIWTG) the chain is on the extracellular side. A helical transmembrane segment spans residues 61–81 (LHLFAQYFMLGNITWNASLFV). Residues 82–151 (KTNPSIRGVF…HNYRYFLTCL (70 aa)) lie on the Cytoplasmic side of the membrane. One can recognise a DHHC domain in the interval 102–152 (RYCYNCETHTPPRCSHCYDCNVCVLRRDHHCVFFGQCVGFHNYRYFLTCLL). Cys-132 serves as the catalytic S-palmitoyl cysteine intermediate. The chain crosses the membrane as a helical span at residues 152–172 (LFMWAGLLYAVVMNAEVFIFI). Topologically, residues 173–176 (LKEG) are extracellular. A helical membrane pass occupies residues 177 to 197 (VTFHSVMLLLVPWIMLVSGQV). Residues 198-203 (TTRAFA) lie on the Cytoplasmic side of the membrane. Residues 204 to 224 (FAFIADTCVVGFLLVAAFLFF) traverse the membrane as a helical segment. At 225 to 295 (HVALMLRGQT…SLEPKKQAVH (71 aa)) the chain is on the extracellular side.

It belongs to the DHHC palmitoyltransferase family.

The protein resides in the membrane. It catalyses the reaction L-cysteinyl-[protein] + hexadecanoyl-CoA = S-hexadecanoyl-L-cysteinyl-[protein] + CoA. Functionally, probable palmitoyltransferase that could catalyze the addition of palmitate onto various protein substrates. In Danio rerio (Zebrafish), this protein is Probable palmitoyltransferase ZDHHC24.